The following is a 568-amino-acid chain: TNF receptor-associated factor 3 (568 aa).

Positions 1-28 (MESSKKMDSPGALQTNPPLKLHTDRSAG) are disordered. S9 carries the phosphoserine modification. C56 participates in a covalent cross-link: Glycyl cysteine thioester (Cys-Gly) (interchain with G-Cter in ubiquitin). The RING-type zinc-finger motif lies at 68–77 (CGHRFCESCM). C124 is covalently cross-linked (Glycyl cysteine thioester (Cys-Gly) (interchain with G-Cter in ubiquitin)). 2 TRAF-type zinc fingers span residues 135–190 (VHLK…IALQ) and 191–249 (KHED…QQIK). A Glycyl lysine isopeptide (Lys-Gly) (interchain with G-Cter in ubiquitin) cross-link involves residue K168. The stretch at 267 to 338 (SNSLEKKVSL…KLKELDKEIR (72 aa)) forms a coiled coil. A Glycyl lysine isopeptide (Lys-Gly) (interchain with G-Cter in ubiquitin) cross-link involves residue K329. Residues 392 to 415 (LSVHDIRLADMDLRFQVLETASYN) form a (Microbial infection) Interaction with glycoprotein N of Andes and New York hantaviruses region. Residues 415–560 (NGVLIWKIRD…DDTIFIKVIV (146 aa)) form the MATH domain.

The protein belongs to the TNF receptor-associated factor family. A subfamily. In terms of assembly, homotrimer. Heterotrimer with TRAF2 and TRAF5. Interacts with LTBR/TNFRSF3, TNFRSF4, TNFRSF5/CD40, TNFRSF8/CD30, TNFRSF13C TNFRSF17/BCMA, TLR4 and EDAR. Interacts with MAP3K5, MAP3K14, TRAIP/TRIP, TDP2/TTRAP, TANK/ITRAF and TRAF3IP1. Interaction with TNFRSF5/CD40 is modulated by TANK/ITRAF, which competes for the same binding site. Interacts with TICAM1. Interacts with TRAFD1. Interacts with OTUB1, OTUB2 and OTUD5. Interacts with RNF216, OPTN and TBK1. Identified in a complex with TRAF2, MAP3K14 and BIRC3. Interacts with BIRC2 and BIRC3. Upon exposure to bacterial lipopolysaccharide (LPS), recruited to a transient complex containing TLR4, TRAF3, TRAF6, IKBKG, MAP3K7, MYD88, TICAM1, BIRC2, BIRC3 and UBE2N. Interacts (via RING-type zinc finger domain) with SRC. Interacts with CARD14. Interacts (via MATH domain) with PTPN22; the interaction promotes TRAF3 polyubiquitination. Interacts with MAVS. Directly interacts with DDX3X; this interaction stimulates TRAF3 'Lys-63' ubiquitination. Interacts with IRF3. Interacts with IKBKE in the course of Sendai virus infection. Interacts with TRIM35. Interacts with GAPDH; promoting TRAF3 ubiquitination. Interacts with PPP3CA and PPP3CB. Interacts with ATP1B1; promoting TRAF3 ubiquitination. Interacts with RALGDS. Interacts with FBXO11. As to quaternary structure, (Microbial infection) Interacts (via N-terminus) with New York hantavirus glycoprotein N (via C-terminus); this interaction inhibits the formation of TRAF3-TBK1 complexes. (Microbial infection) Interacts with Andes hantavirus glycoprotein N (via C-terminus); this interaction inhibits the formation of TRAF3-TBK1 complexes. In terms of assembly, (Microbial infection) Interacts with Tula hantavirus glycoprotein N (via C-terminus); this interaction inhibits the formation of TRAF3-TBK1 complexes. As to quaternary structure, (Microbial infection) Interacts with Epstein-Barr virus protein LMP1. Post-translationally, undergoes 'Lys-48'-linked polyubiquitination, leading to its proteasomal degradation in response to signaling by TNFSF13B, TLR4 or through CD40. 'Lys-48'-linked polyubiquitinated form is deubiquitinated by OTUD7B, preventing TRAF3 proteolysis and over-activation of non-canonical NF-kappa-B. Undergoes 'Lys-63'-linked ubiquitination during early stages of virus infection, and 'Lys-48'-linked ubiquitination during later stages. Undergoes both 'Lys-48'-linked and 'Lys-63'-linked ubiquitination in response to TLR3 and TLR4 signaling. 'Lys-63'-linked ubiquitination can be mediated by TRIM35. Deubiquitinated by OTUB1, OTUB2 and OTUD5. Undergoes 'Lys-63'-linked deubiquitination by MYSM1 to terminate the pattern-recognition receptors/PRRs pathways. Also undergoes 'Lys-29'-linked ubiquitination on Cys-56 and Cys-124 by NEDD4L; leading to increased 'Lys-48'- and 'Lys-63'-linked ubiquitination as well as increased binding to TBK1. TLR4 signals emanating from bacteria containing vesicles trigger 'Lys-33'-linked polyubiquitination that promotes the assembly of the exocyst complex thereby connecting innate immune signaling to the cellular trafficking apparatus. Deubiquitinated by USP25 during viral infection, leading to TRAF3 stabilization and type I interferon production. Ubiquitinated at Lys-329 by the SCF(FBXL2) complex, leading to its degradation by the proteasome. 'Lys-63'-linked ubiquitination by FBXO11 in a NEDD8-dependent manner promotes the amplification of IFN-I signaling. (Microbial infection) Cleaved by enterovirus D68 protease 2A; leading to inhibition of NF-kappa-B or IFN-beta triggered by TRAF3.

Its subcellular location is the cytoplasm. It is found in the endosome. It localises to the mitochondrion. The enzyme catalyses S-ubiquitinyl-[E2 ubiquitin-conjugating enzyme]-L-cysteine + [acceptor protein]-L-lysine = [E2 ubiquitin-conjugating enzyme]-L-cysteine + N(6)-ubiquitinyl-[acceptor protein]-L-lysine.. Cytoplasmic E3 ubiquitin ligase that regulates various signaling pathways, such as the NF-kappa-B, mitogen-activated protein kinase (MAPK) and interferon regulatory factor (IRF) pathways, and thus controls a lot of biological processes in both immune and non-immune cell types. In TLR and RLR signaling pathways, acts as an E3 ubiquitin ligase promoting the synthesis of 'Lys-63'-linked polyubiquitin chains on several substrates such as ASC that lead to the activation of the type I interferon response or the inflammasome. Following the activation of certain TLRs such as TLR4, acts as a negative NF-kappa-B regulator, possibly to avoid unregulated inflammatory response, and its degradation via 'Lys-48'-linked polyubiquitination is required for MAPK activation and production of inflammatory cytokines. Alternatively, when TLR4 orchestrates bacterial expulsion, TRAF3 undergoes 'Lys-33'-linked polyubiquitination and subsequently binds to RALGDS, mobilizing the exocyst complex to rapidly expel intracellular bacteria back for clearance. Also acts as a constitutive negative regulator of the alternative NF-kappa-B pathway, which controls B-cell survival and lymphoid organ development. Required for normal antibody isotype switching from IgM to IgG. Plays a role T-cell dependent immune responses. Down-regulates proteolytic processing of NFKB2, and thereby inhibits non-canonical activation of NF-kappa-B. Promotes ubiquitination and proteasomal degradation of MAP3K14. This Homo sapiens (Human) protein is TNF receptor-associated factor 3.